Here is a 211-residue protein sequence, read N- to C-terminus: UPF0329 protein ECU07_1880/ECU10_0020 (211 aa).

Belongs to the UPF0329 family.

The chain is UPF0329 protein ECU07_1880/ECU10_0020 from Encephalitozoon cuniculi (strain GB-M1) (Microsporidian parasite).